Reading from the N-terminus, the 338-residue chain is Ketol-acid reductoisomerase (NADP(+)) (338 aa).

Residues 1 to 181 enclose the KARI N-terminal Rossmann domain; it reads MQIYYDKDAD…GGGRAGIIET (181 aa). NADP(+) is bound by residues 24 to 27, Arg-47, Ser-50, Ser-52, and 82 to 85; these read YGSQ and DEHQ. His-107 is an active-site residue. Gly-133 contributes to the NADP(+) binding site. Residues 182–327 form the KARI C-terminal knotted domain; it reads TFREETETDL…ARLRDMMPWI (146 aa). Mg(2+)-binding residues include Asp-190, Glu-194, Glu-226, and Glu-230. Ser-251 serves as a coordination point for substrate.

The protein belongs to the ketol-acid reductoisomerase family. Requires Mg(2+) as cofactor.

It catalyses the reaction (2R)-2,3-dihydroxy-3-methylbutanoate + NADP(+) = (2S)-2-acetolactate + NADPH + H(+). The enzyme catalyses (2R,3R)-2,3-dihydroxy-3-methylpentanoate + NADP(+) = (S)-2-ethyl-2-hydroxy-3-oxobutanoate + NADPH + H(+). Its pathway is amino-acid biosynthesis; L-isoleucine biosynthesis; L-isoleucine from 2-oxobutanoate: step 2/4. It participates in amino-acid biosynthesis; L-valine biosynthesis; L-valine from pyruvate: step 2/4. In terms of biological role, involved in the biosynthesis of branched-chain amino acids (BCAA). Catalyzes an alkyl-migration followed by a ketol-acid reduction of (S)-2-acetolactate (S2AL) to yield (R)-2,3-dihydroxy-isovalerate. In the isomerase reaction, S2AL is rearranged via a Mg-dependent methyl migration to produce 3-hydroxy-3-methyl-2-ketobutyrate (HMKB). In the reductase reaction, this 2-ketoacid undergoes a metal-dependent reduction by NADPH to yield (R)-2,3-dihydroxy-isovalerate. This is Ketol-acid reductoisomerase (NADP(+)) from Methylococcus capsulatus (strain ATCC 33009 / NCIMB 11132 / Bath).